A 437-amino-acid chain; its full sequence is Homogentisate 1,2-dioxygenase (437 aa).

Residues 15–34 form a disordered region; it reads NEHATSDPRVPDALPVGQNS. H336, E342, and H372 together coordinate Fe cation.

The protein belongs to the homogentisate dioxygenase family. Fe cation serves as cofactor. In terms of tissue distribution, expressed in the hypodermis and intestine.

It catalyses the reaction homogentisate + O2 = 4-maleylacetoacetate + H(+). It functions in the pathway amino-acid degradation; L-phenylalanine degradation; acetoacetate and fumarate from L-phenylalanine: step 4/6. Plays a role in the tyrosine degradation pathway. This Caenorhabditis elegans protein is Homogentisate 1,2-dioxygenase.